The chain runs to 609 residues: Chaperone protein DnaK (609 aa).

Position 173 is a phosphothreonine; by autocatalysis (Thr-173). Positions 525 to 542 (ENISDEDKKNAEEKKDAL) are enriched in basic and acidic residues. Disordered stretches follow at residues 525–554 (ENISDEDKKNAEEKKDALKTALEGEDIDDI) and 574–609 (EQAQQAQQQGQEEQGSQDSTVEDADFKEVKDDEDKK). Positions 574–587 (EQAQQAQQQGQEEQ) are enriched in low complexity. Positions 597 to 609 (ADFKEVKDDEDKK) are enriched in basic and acidic residues.

It belongs to the heat shock protein 70 family.

Functionally, acts as a chaperone. In Staphylococcus epidermidis (strain ATCC 35984 / DSM 28319 / BCRC 17069 / CCUG 31568 / BM 3577 / RP62A), this protein is Chaperone protein DnaK.